The following is a 376-amino-acid chain: Succinyl-diaminopimelate desuccinylase (376 aa).

His67 lines the Zn(2+) pocket. The active site involves Asp69. Residue Asp100 participates in Zn(2+) binding. Glu134 acts as the Proton acceptor in catalysis. Residues Glu135, Glu163, and His349 each coordinate Zn(2+).

Belongs to the peptidase M20A family. DapE subfamily. In terms of assembly, homodimer. It depends on Zn(2+) as a cofactor. The cofactor is Co(2+).

It carries out the reaction N-succinyl-(2S,6S)-2,6-diaminopimelate + H2O = (2S,6S)-2,6-diaminopimelate + succinate. It participates in amino-acid biosynthesis; L-lysine biosynthesis via DAP pathway; LL-2,6-diaminopimelate from (S)-tetrahydrodipicolinate (succinylase route): step 3/3. Catalyzes the hydrolysis of N-succinyl-L,L-diaminopimelic acid (SDAP), forming succinate and LL-2,6-diaminopimelate (DAP), an intermediate involved in the bacterial biosynthesis of lysine and meso-diaminopimelic acid, an essential component of bacterial cell walls. This Pseudoalteromonas atlantica (strain T6c / ATCC BAA-1087) protein is Succinyl-diaminopimelate desuccinylase.